We begin with the raw amino-acid sequence, 930 residues long: Zn(2)-C6 fungal-type transcription factor FTF1c (930 aa).

The segment at residues 137–164 (CIACRRKKIRCSGEKPACEHCLCSYIPC) is a DNA-binding region (zn(2)-C6 fungal-type).

It is found in the nucleus. Functionally, zn(2)-C6 fungal-type transcription factor that has a role in the establishment of the fungus within the plant and/or the progress of the disease. Regulates the expression of virulence factors such as SIX1 and SIX6. The protein is Zn(2)-C6 fungal-type transcription factor FTF1c of Fusarium oxysporum f. sp. lycopersici (strain 4287 / CBS 123668 / FGSC 9935 / NRRL 34936) (Fusarium vascular wilt of tomato).